The primary structure comprises 302 residues: Ethylmalonyl-CoA decarboxylase (302 aa).

The protein belongs to the enoyl-CoA hydratase/isomerase family.

Its subcellular location is the cytoplasm. It is found in the cytosol. It carries out the reaction (2S)-ethylmalonyl-CoA + H(+) = butanoyl-CoA + CO2. The enzyme catalyses (S)-methylmalonyl-CoA + H(+) = propanoyl-CoA + CO2. It catalyses the reaction (2R)-ethylmalonyl-CoA + H(+) = butanoyl-CoA + CO2. Functionally, decarboxylates ethylmalonyl-CoA, a potentially toxic metabolite, to form butyryl-CoA, suggesting it might be involved in metabolite proofreading. Acts preferentially on (S)-ethylmalonyl-CoA but also has some activity on the (R)-isomer. Also has methylmalonyl-CoA decarboxylase activity at lower level. In Danio rerio (Zebrafish), this protein is Ethylmalonyl-CoA decarboxylase (echdc1).